The sequence spans 250 residues: tRNA (guanine-N(7)-)-methyltransferase (250 aa).

Residues E86, E111, D138, and D161 each contribute to the S-adenosyl-L-methionine site. D161 is a catalytic residue. Residues K165, D197, and 229-232 (TEFE) contribute to the substrate site.

Belongs to the class I-like SAM-binding methyltransferase superfamily. TrmB family.

It carries out the reaction guanosine(46) in tRNA + S-adenosyl-L-methionine = N(7)-methylguanosine(46) in tRNA + S-adenosyl-L-homocysteine. It functions in the pathway tRNA modification; N(7)-methylguanine-tRNA biosynthesis. Its function is as follows. Catalyzes the formation of N(7)-methylguanine at position 46 (m7G46) in tRNA. In Treponema pallidum (strain Nichols), this protein is tRNA (guanine-N(7)-)-methyltransferase.